We begin with the raw amino-acid sequence, 598 residues long: Aspartate--tRNA(Asp/Asn) ligase (598 aa).

Glutamate 177 lines the L-aspartate pocket. Residues 201-204 (QLFK) form an aspartate region. Arginine 223 is a binding site for L-aspartate. ATP contacts are provided by residues 223–225 (RDE) and glutamine 232. An L-aspartate-binding site is contributed by histidine 456. Glutamate 493 provides a ligand contact to ATP. L-aspartate is bound at residue arginine 500. Position 545–548 (545–548 (GLDR)) interacts with ATP.

The protein belongs to the class-II aminoacyl-tRNA synthetase family. Type 1 subfamily. In terms of assembly, homodimer.

Its subcellular location is the cytoplasm. It catalyses the reaction tRNA(Asx) + L-aspartate + ATP = L-aspartyl-tRNA(Asx) + AMP + diphosphate. In terms of biological role, aspartyl-tRNA synthetase with relaxed tRNA specificity since it is able to aspartylate not only its cognate tRNA(Asp) but also tRNA(Asn). Reaction proceeds in two steps: L-aspartate is first activated by ATP to form Asp-AMP and then transferred to the acceptor end of tRNA(Asp/Asn). The polypeptide is Aspartate--tRNA(Asp/Asn) ligase (Prochlorococcus marinus (strain MIT 9301)).